A 375-amino-acid polypeptide reads, in one-letter code: Alcohol dehydrogenase 1 (375 aa).

An N-acetylserine modification is found at serine 2. Zn(2+) is bound by residues cysteine 47, histidine 68, cysteine 98, cysteine 101, cysteine 104, cysteine 112, and cysteine 175. Residues 200-205 (GLGGVG), aspartate 224, and lysine 229 contribute to the NAD(+) site. Residue lysine 234 is modified to N6-succinyllysine. Residue 293–295 (VGV) coordinates NAD(+). At lysine 340 the chain carries N6-succinyllysine. An NAD(+)-binding site is contributed by arginine 370.

Belongs to the zinc-containing alcohol dehydrogenase family. Class-I subfamily. Dimer of identical or non-identical chains of three types (A, B, C), which are coded by 3 separate genes at different loci. Zn(2+) is required as a cofactor. In terms of tissue distribution, expressed at high levels in the liver, small intestine and eye, at moderate levels in kidney, ovary and uterus, and at low levels in the spinal cord, thymus, heart, stomach mucosa, skin and testis.

The protein localises to the cytoplasm. The enzyme catalyses a primary alcohol + NAD(+) = an aldehyde + NADH + H(+). The catalysed reaction is a secondary alcohol + NAD(+) = a ketone + NADH + H(+). In Mus musculus (Mouse), this protein is Alcohol dehydrogenase 1 (Adh1).